A 405-amino-acid polypeptide reads, in one-letter code: Tryptophan synthase beta chain (405 aa).

An N6-(pyridoxal phosphate)lysine modification is found at K98.

It belongs to the TrpB family. In terms of assembly, tetramer of two alpha and two beta chains. The cofactor is pyridoxal 5'-phosphate.

It catalyses the reaction (1S,2R)-1-C-(indol-3-yl)glycerol 3-phosphate + L-serine = D-glyceraldehyde 3-phosphate + L-tryptophan + H2O. It functions in the pathway amino-acid biosynthesis; L-tryptophan biosynthesis; L-tryptophan from chorismate: step 5/5. Functionally, the beta subunit is responsible for the synthesis of L-tryptophan from indole and L-serine. This chain is Tryptophan synthase beta chain, found in Xanthomonas axonopodis pv. citri (strain 306).